Consider the following 177-residue polypeptide: ATP synthase subunit delta (177 aa).

This sequence belongs to the ATPase delta chain family. In terms of assembly, F-type ATPases have 2 components, F(1) - the catalytic core - and F(0) - the membrane proton channel. F(1) has five subunits: alpha(3), beta(3), gamma(1), delta(1), epsilon(1). F(0) has three main subunits: a(1), b(2) and c(10-14). The alpha and beta chains form an alternating ring which encloses part of the gamma chain. F(1) is attached to F(0) by a central stalk formed by the gamma and epsilon chains, while a peripheral stalk is formed by the delta and b chains.

It is found in the cell inner membrane. F(1)F(0) ATP synthase produces ATP from ADP in the presence of a proton or sodium gradient. F-type ATPases consist of two structural domains, F(1) containing the extramembraneous catalytic core and F(0) containing the membrane proton channel, linked together by a central stalk and a peripheral stalk. During catalysis, ATP synthesis in the catalytic domain of F(1) is coupled via a rotary mechanism of the central stalk subunits to proton translocation. Its function is as follows. This protein is part of the stalk that links CF(0) to CF(1). It either transmits conformational changes from CF(0) to CF(1) or is implicated in proton conduction. The protein is ATP synthase subunit delta of Shewanella denitrificans (strain OS217 / ATCC BAA-1090 / DSM 15013).